The primary structure comprises 143 residues: 6,7-dimethyl-8-ribityllumazine synthase (143 aa).

5-amino-6-(D-ribitylamino)uracil-binding positions include W10, 44-46 (SFE), and 68-70 (CVI). A (2S)-2-hydroxy-3-oxobutyl phosphate-binding site is contributed by 73–74 (DT). H76 acts as the Proton donor in catalysis. Y101 lines the 5-amino-6-(D-ribitylamino)uracil pocket. R115 serves as a coordination point for (2S)-2-hydroxy-3-oxobutyl phosphate.

It belongs to the DMRL synthase family.

It catalyses the reaction (2S)-2-hydroxy-3-oxobutyl phosphate + 5-amino-6-(D-ribitylamino)uracil = 6,7-dimethyl-8-(1-D-ribityl)lumazine + phosphate + 2 H2O + H(+). The protein operates within cofactor biosynthesis; riboflavin biosynthesis; riboflavin from 2-hydroxy-3-oxobutyl phosphate and 5-amino-6-(D-ribitylamino)uracil: step 1/2. Catalyzes the formation of 6,7-dimethyl-8-ribityllumazine by condensation of 5-amino-6-(D-ribitylamino)uracil with 3,4-dihydroxy-2-butanone 4-phosphate. This is the penultimate step in the biosynthesis of riboflavin. The protein is 6,7-dimethyl-8-ribityllumazine synthase of Bacteroides fragilis (strain YCH46).